A 457-amino-acid polypeptide reads, in one-letter code: Bifunctional protein GlmU (457 aa).

Residues 1–227 (MTQLSVVILA…FMEVEGANNR (227 aa)) are pyrophosphorylase. UDP-N-acetyl-alpha-D-glucosamine contacts are provided by residues 9–12 (LAAG), Lys23, Gln74, 79–80 (GT), 101–103 (YGD), Gly138, Glu152, Asn167, and Asn225. Residue Asp103 coordinates Mg(2+). Position 225 (Asn225) interacts with Mg(2+). Residues 228-248 (LQLAALERFYQKTQAEKLLLA) are linker. Residues 249–457 (GVRLIDPARF…QRPTKKKIAD (209 aa)) form an N-acetyltransferase region. UDP-N-acetyl-alpha-D-glucosamine is bound by residues Arg331 and Lys349. His361 (proton acceptor) is an active-site residue. 2 residues coordinate UDP-N-acetyl-alpha-D-glucosamine: Tyr364 and Asn375. Residues Ala378, 384-385 (NY), Ser403, Ala421, and Arg438 each bind acetyl-CoA.

In the N-terminal section; belongs to the N-acetylglucosamine-1-phosphate uridyltransferase family. The protein in the C-terminal section; belongs to the transferase hexapeptide repeat family. In terms of assembly, homotrimer. Requires Mg(2+) as cofactor.

The protein localises to the cytoplasm. The enzyme catalyses alpha-D-glucosamine 1-phosphate + acetyl-CoA = N-acetyl-alpha-D-glucosamine 1-phosphate + CoA + H(+). It carries out the reaction N-acetyl-alpha-D-glucosamine 1-phosphate + UTP + H(+) = UDP-N-acetyl-alpha-D-glucosamine + diphosphate. It participates in nucleotide-sugar biosynthesis; UDP-N-acetyl-alpha-D-glucosamine biosynthesis; N-acetyl-alpha-D-glucosamine 1-phosphate from alpha-D-glucosamine 6-phosphate (route II): step 2/2. It functions in the pathway nucleotide-sugar biosynthesis; UDP-N-acetyl-alpha-D-glucosamine biosynthesis; UDP-N-acetyl-alpha-D-glucosamine from N-acetyl-alpha-D-glucosamine 1-phosphate: step 1/1. Its pathway is bacterial outer membrane biogenesis; LPS lipid A biosynthesis. In terms of biological role, catalyzes the last two sequential reactions in the de novo biosynthetic pathway for UDP-N-acetylglucosamine (UDP-GlcNAc). The C-terminal domain catalyzes the transfer of acetyl group from acetyl coenzyme A to glucosamine-1-phosphate (GlcN-1-P) to produce N-acetylglucosamine-1-phosphate (GlcNAc-1-P), which is converted into UDP-GlcNAc by the transfer of uridine 5-monophosphate (from uridine 5-triphosphate), a reaction catalyzed by the N-terminal domain. The polypeptide is Bifunctional protein GlmU (Actinobacillus pleuropneumoniae serotype 5b (strain L20)).